A 310-amino-acid polypeptide reads, in one-letter code: tRNA dimethylallyltransferase (310 aa).

15–22 lines the ATP pocket; that stretch reads GATASGKT. Position 17–22 (17–22) interacts with substrate; sequence TASGKT.

This sequence belongs to the IPP transferase family. As to quaternary structure, monomer. Mg(2+) is required as a cofactor.

It carries out the reaction adenosine(37) in tRNA + dimethylallyl diphosphate = N(6)-dimethylallyladenosine(37) in tRNA + diphosphate. Functionally, catalyzes the transfer of a dimethylallyl group onto the adenine at position 37 in tRNAs that read codons beginning with uridine, leading to the formation of N6-(dimethylallyl)adenosine (i(6)A). The sequence is that of tRNA dimethylallyltransferase from Nocardioides sp. (strain ATCC BAA-499 / JS614).